A 543-amino-acid polypeptide reads, in one-letter code: CTP synthase (543 aa).

Residues 1 to 265 are amidoligase domain; sequence MARYIFITGG…DDEVLAAFGI (265 aa). Ser-13 is a CTP binding site. Ser-13 contributes to the UTP binding site. 14 to 19 contributes to the ATP binding site; sequence SLGKGL. Tyr-54 contributes to the L-glutamine binding site. Asp-71 contacts ATP. Residues Asp-71 and Glu-139 each contribute to the Mg(2+) site. CTP is bound by residues 146 to 148, 186 to 191, and Lys-222; these read DIE and KTKPTQ. Residues 186–191 and Lys-222 each bind UTP; that span reads KTKPTQ. Position 238 to 240 (238 to 240) interacts with ATP; it reads RDV. Residues 291 to 542 form the Glutamine amidotransferase type-1 domain; sequence TIAIVGKYTG…IQAAVVQSRL (252 aa). Gly-353 contributes to the L-glutamine binding site. Cys-380 functions as the Nucleophile; for glutamine hydrolysis in the catalytic mechanism. Residues 381–384, Glu-404, and Arg-470 each bind L-glutamine; that span reads FGMQ. Active-site residues include His-515 and Glu-517.

The protein belongs to the CTP synthase family. As to quaternary structure, homotetramer.

It carries out the reaction UTP + L-glutamine + ATP + H2O = CTP + L-glutamate + ADP + phosphate + 2 H(+). It catalyses the reaction L-glutamine + H2O = L-glutamate + NH4(+). The catalysed reaction is UTP + NH4(+) + ATP = CTP + ADP + phosphate + 2 H(+). It functions in the pathway pyrimidine metabolism; CTP biosynthesis via de novo pathway; CTP from UDP: step 2/2. With respect to regulation, allosterically activated by GTP, when glutamine is the substrate; GTP has no effect on the reaction when ammonia is the substrate. The allosteric effector GTP functions by stabilizing the protein conformation that binds the tetrahedral intermediate(s) formed during glutamine hydrolysis. Inhibited by the product CTP, via allosteric rather than competitive inhibition. Catalyzes the ATP-dependent amination of UTP to CTP with either L-glutamine or ammonia as the source of nitrogen. Regulates intracellular CTP levels through interactions with the four ribonucleotide triphosphates. This Bradyrhizobium sp. (strain BTAi1 / ATCC BAA-1182) protein is CTP synthase.